Consider the following 237-residue polypeptide: Trypsin-1 (237 aa).

The Peptidase S1 domain maps to 1–237 (IVGGTDAVLG…HVDWIKANAV (237 aa)). An intrachain disulfide couples C30 to C46. The Charge relay system role is filled by H45. Ca(2+)-binding residues include E64, V69, and E74. D96 acts as the Charge relay system in catalysis. Intrachain disulfides connect C159/C174 and C185/C213. The active-site Charge relay system is the S189.

It belongs to the peptidase S1 family. Ca(2+) serves as cofactor.

The protein resides in the secreted. Its subcellular location is the extracellular space. The catalysed reaction is Preferential cleavage: Arg-|-Xaa, Lys-|-Xaa.. In Astacus astacus (Noble crayfish), this protein is Trypsin-1.